Here is a 42-residue protein sequence, read N- to C-terminus: Hemoglobin subunit beta-A (42 aa).

Residues 2 to 42 form the Globin domain; that stretch reads EWTDAERSAILSLWGKIDTDELGPALLARLXLVXXXTQRYF.

Belongs to the globin family. In terms of assembly, heterotetramer of two alpha chains and two beta chains. Red blood cells.

Involved in oxygen transport from gills to the various peripheral tissues. The chain is Hemoglobin subunit beta-A from Catostomus clarkii (Desert sucker).